The primary structure comprises 3661 residues: Serine/threonine-protein kinase SMG1 (3661 aa).

Over residues 1-11 (MSRRAPGSRLS) the composition is skewed to low complexity. 2 disordered regions span residues 1 to 101 (MSRR…TYGR) and 116 to 144 (PEFTSVQHGSRALATKDMRKSQERSMSYS). The tract at residues 1 to 1977 (MSRRAPGSRL…GVLLQQHMYV (1977 aa)) is interaction with SMG8 and SMG9. Residues 26 to 35 (NDWQPRTDSA) show a composition bias toward polar residues. Basic and acidic residues-rich tracts occupy residues 69 to 86 (QRHDDTRVHADIQNDEKG) and 129 to 138 (ATKDMRKSQE). Lysine 173 is subject to N6-acetyllysine. Polar residues predominate over residues 1154 to 1165 (RNSASPKHSLNG). The interval 1154 to 1175 (RNSASPKHSLNGESRKTVLSKP) is disordered. Positions 1283 to 1866 (RELQKSIEVQ…LYPAIVGTIS (584 aa)) constitute an FAT domain. The stretch at 1817–1852 (APWRGIIPQLFSRLNHPEVYVRQSICNLLCRVAQDS) is one HEAT repeat. Residues 1898 to 1919 (ECEGGSPPASQDSNKDEPKSGL) form a disordered region. The PI3K/PI4K catalytic domain occupies 2124–2463 (VGGTITILPT…MEREITRSLF (340 aa)). Residues 2130–2136 (ILPTKTK) are G-loop. Residues 2332–2340 (GLGDRHLDN) form a catalytic loop region. Residues 2352–2376 (HIDYNVCFEKGKSLRVPEKVPFRMT) are activation loop. Threonine 3550 bears the Phosphothreonine mark. Residues serine 3556 and serine 3570 each carry the phosphoserine modification. Polar residues predominate over residues 3568-3579 (ATSADTPPSTVP). The interval 3568–3591 (ATSADTPPSTVPGTGKSVACSPKK) is disordered. Phosphothreonine is present on residues threonine 3573 and threonine 3577. One can recognise an FATC domain in the interval 3629 to 3661 (RRMSVAEQVDYVIKEATNLDNLAQLYEGWTAWV).

Belongs to the PI3/PI4-kinase family. In terms of assembly, component of the SMG1C complex composed of SMG1, SMG8 and SMG9; the recruitment of SMG8 to SMG1 N-terminus induces a large conformational change in the SMG1 C-terminal head domain containing the catalytic domain. Component of the transient SURF (SMG1-UPF1-eRF1-eRF3) complex. Part of a complex composed of SMG1, DHX34 and UPF1; within the complex DHX34 acts as a scaffolding protein to facilitate SMG1 phosphorylation of UPF1. Interacts with PRKCI. Interacts with TELO2 and TTI1. Interacts with RUVBL1 and RUVBL2. Interacts with UPF2. Interacts with DHX34 (via C-terminus); the interaction is RNA-independent. Requires Mn(2+) as cofactor. Autophosphorylated. As to expression, widely expressed, with highest level in heart and skeletal muscle. Expressed in placenta, brain, lung and spleen, but not in liver.

The protein localises to the nucleus. The protein resides in the cytoplasm. It catalyses the reaction L-seryl-[protein] + ATP = O-phospho-L-seryl-[protein] + ADP + H(+). The enzyme catalyses L-threonyl-[protein] + ATP = O-phospho-L-threonyl-[protein] + ADP + H(+). Inhibited by caffeine, LY294002 and wortmannin. Functionally, serine/threonine protein kinase involved in both mRNA surveillance and genotoxic stress response pathways. Recognizes the substrate consensus sequence [ST]-Q. Plays a central role in nonsense-mediated decay (NMD) of mRNAs containing premature stop codons by phosphorylating UPF1/RENT1. Recruited by release factors to stalled ribosomes together with SMG8 and SMG9 (forming the SMG1C protein kinase complex), and UPF1 to form the transient SURF (SMG1-UPF1-eRF1-eRF3) complex. In EJC-dependent NMD, the SURF complex associates with the exon junction complex (EJC) through UPF2 and allows the formation of an UPF1-UPF2-UPF3 surveillance complex which is believed to activate NMD. Also acts as a genotoxic stress-activated protein kinase that displays some functional overlap with ATM. Can phosphorylate p53/TP53 and is required for optimal p53/TP53 activation after cellular exposure to genotoxic stress. Its depletion leads to spontaneous DNA damage and increased sensitivity to ionizing radiation (IR). May activate PRKCI but not PRKCZ. The sequence is that of Serine/threonine-protein kinase SMG1 from Homo sapiens (Human).